We begin with the raw amino-acid sequence, 266 residues long: uncharacterized protein (266 aa).

The PH domain occupies 35-131 (VLVGEGVLVK…WMLHIERCVT (97 aa)). An FYVE-type zinc finger spans residues 152 to 212 (DGEAVKCMVC…VCDHCFDSLS (61 aa)). C158, C161, C175, C178, C183, C186, C204, and C207 together coordinate Zn(2+). The disordered stretch occupies residues 213–266 (SATPGQEESEPKTGNRLHHEDSSSDSEDEVNGSGRSSNESRPTFYREDVQQPAT). Composition is skewed to basic and acidic residues over residues 221–234 (SEPK…HEDS) and 256–266 (FYREDVQQPAT).

This is an uncharacterized protein from Caenorhabditis elegans.